The chain runs to 733 residues: uncharacterized protein (733 aa).

Residues 174 to 194 (WAVMILASLRPELFGPIIIAG) traverse the membrane as a helical segment.

Its subcellular location is the membrane. This is an uncharacterized protein from Rhizobium meliloti (Ensifer meliloti).